A 397-amino-acid polypeptide reads, in one-letter code: Riboflavin biosynthesis protein RibBA (397 aa).

The segment at 1-199 is DHBP synthase; that stretch reads MFHRIEEALE…IEDLIAYRRH (199 aa). D-ribulose 5-phosphate-binding positions include 26–27, D31, 138–142, and E162; these read RE and RAGHT. Mg(2+) is bound at residue E27. A Mg(2+)-binding site is contributed by H141. The tract at residues 200 to 397 is GTP cyclohydrolase II; that stretch reads HETLVTREAE…VNKLGHLLNL (198 aa). 250–254 is a GTP binding site; that stretch reads RVHSE. Zn(2+) contacts are provided by C255, C266, and C268. GTP is bound by residues Q271, 293–295, and T315; that span reads EGR. The Proton acceptor; for GTP cyclohydrolase activity role is filled by D327. Residue R329 is the Nucleophile; for GTP cyclohydrolase activity of the active site. 2 residues coordinate GTP: T350 and K355.

This sequence in the N-terminal section; belongs to the DHBP synthase family. It in the C-terminal section; belongs to the GTP cyclohydrolase II family. Mg(2+) is required as a cofactor. The cofactor is Mn(2+). Zn(2+) serves as cofactor.

It catalyses the reaction D-ribulose 5-phosphate = (2S)-2-hydroxy-3-oxobutyl phosphate + formate + H(+). The enzyme catalyses GTP + 4 H2O = 2,5-diamino-6-hydroxy-4-(5-phosphoribosylamino)-pyrimidine + formate + 2 phosphate + 3 H(+). Its pathway is cofactor biosynthesis; riboflavin biosynthesis; 2-hydroxy-3-oxobutyl phosphate from D-ribulose 5-phosphate: step 1/1. The protein operates within cofactor biosynthesis; riboflavin biosynthesis; 5-amino-6-(D-ribitylamino)uracil from GTP: step 1/4. Catalyzes the conversion of D-ribulose 5-phosphate to formate and 3,4-dihydroxy-2-butanone 4-phosphate. Its function is as follows. Catalyzes the conversion of GTP to 2,5-diamino-6-ribosylamino-4(3H)-pyrimidinone 5'-phosphate (DARP), formate and pyrophosphate. This Bacillus cereus (strain ATCC 14579 / DSM 31 / CCUG 7414 / JCM 2152 / NBRC 15305 / NCIMB 9373 / NCTC 2599 / NRRL B-3711) protein is Riboflavin biosynthesis protein RibBA.